Consider the following 150-residue polypeptide: Siroheme decarboxylase NirD subunit (150 aa).

Belongs to the Ahb/Nir family. As to quaternary structure, probably forms a complex composed of NirD, NirL, NirG and NirH. All proteins are required for the total conversion of siroheme to didecarboxysiroheme.

The catalysed reaction is siroheme + 2 H(+) = 12,18-didecarboxysiroheme + 2 CO2. The protein operates within porphyrin-containing compound metabolism. Its function is as follows. Involved in heme d1 biosynthesis. Catalyzes the decarboxylation of siroheme into didecarboxysiroheme. The chain is Siroheme decarboxylase NirD subunit from Pseudomonas aeruginosa (strain ATCC 15692 / DSM 22644 / CIP 104116 / JCM 14847 / LMG 12228 / 1C / PRS 101 / PAO1).